Here is a 448-residue protein sequence, read N- to C-terminus: Probable glycine dehydrogenase (decarboxylating) subunit 1 (448 aa).

The protein belongs to the GcvP family. N-terminal subunit subfamily. In terms of assembly, the glycine cleavage system is composed of four proteins: P, T, L and H. In this organism, the P 'protein' is a heterodimer of two subunits.

The enzyme catalyses N(6)-[(R)-lipoyl]-L-lysyl-[glycine-cleavage complex H protein] + glycine + H(+) = N(6)-[(R)-S(8)-aminomethyldihydrolipoyl]-L-lysyl-[glycine-cleavage complex H protein] + CO2. In terms of biological role, the glycine cleavage system catalyzes the degradation of glycine. The P protein binds the alpha-amino group of glycine through its pyridoxal phosphate cofactor; CO(2) is released and the remaining methylamine moiety is then transferred to the lipoamide cofactor of the H protein. The protein is Probable glycine dehydrogenase (decarboxylating) subunit 1 of Listeria welshimeri serovar 6b (strain ATCC 35897 / DSM 20650 / CCUG 15529 / CIP 8149 / NCTC 11857 / SLCC 5334 / V8).